The sequence spans 249 residues: RNA polymerase sigma factor SigI3 (249 aa).

Residues 60 to 73 (EEFSIGLAAFNEAI) carry the Polymerase core binding motif. The segment at residues 199-218 (MKEVLSRIKVNHKTIQRNRK) is a DNA-binding region (H-T-H motif).

Belongs to the sigma-70 factor family. SigI subfamily. As to quaternary structure, interacts with RsgI3.

The protein localises to the cytoplasm. Negatively regulated by the anti-sigma-I factor RsgI3. Binding of the polysaccharide substrate to RsgI3 may lead to the release and activation of SigI3. Its function is as follows. Sigma factors are initiation factors that promote the attachment of RNA polymerase to specific initiation sites and are then released. This sigma factor is involved in regulation of cellulosomal genes via an external polysaccharide-sensing mechanism. Recognizes the predicted promoters associated with sigI3 itself, pl11, ce12 and cipA. In Acetivibrio thermocellus (strain ATCC 27405 / DSM 1237 / JCM 9322 / NBRC 103400 / NCIMB 10682 / NRRL B-4536 / VPI 7372) (Clostridium thermocellum), this protein is RNA polymerase sigma factor SigI3.